Reading from the N-terminus, the 186-residue chain is Holliday junction branch migration complex subunit RuvA (186 aa).

Residues 1–63 are domain I; the sequence is MNDYINGFLY…DNHFKYYGFF (63 aa). The tract at residues 64–137 is domain II; the sequence is NQLVRDLFEI…QKELFNNKIS (74 aa). Position 137 (Ser137) is a region of interest, flexible linker. The domain III stretch occupies residues 137–186; the sequence is SEKKNKVITSLEKLGYKTKDIYKIIINVDEDLTIDELTKYVLEKLSYINN.

It belongs to the RuvA family. Homotetramer. Forms an RuvA(8)-RuvB(12)-Holliday junction (HJ) complex. HJ DNA is sandwiched between 2 RuvA tetramers; dsDNA enters through RuvA and exits via RuvB. An RuvB hexamer assembles on each DNA strand where it exits the tetramer. Each RuvB hexamer is contacted by two RuvA subunits (via domain III) on 2 adjacent RuvB subunits; this complex drives branch migration. In the full resolvosome a probable DNA-RuvA(4)-RuvB(12)-RuvC(2) complex forms which resolves the HJ.

The protein resides in the cytoplasm. The RuvA-RuvB-RuvC complex processes Holliday junction (HJ) DNA during genetic recombination and DNA repair, while the RuvA-RuvB complex plays an important role in the rescue of blocked DNA replication forks via replication fork reversal (RFR). RuvA specifically binds to HJ cruciform DNA, conferring on it an open structure. The RuvB hexamer acts as an ATP-dependent pump, pulling dsDNA into and through the RuvAB complex. HJ branch migration allows RuvC to scan DNA until it finds its consensus sequence, where it cleaves and resolves the cruciform DNA. This is Holliday junction branch migration complex subunit RuvA from Mycoplasma capricolum subsp. capricolum (strain California kid / ATCC 27343 / NCTC 10154).